A 926-amino-acid polypeptide reads, in one-letter code: MSTNPNPGIHQYAPSTLPREREREGATNSPQRNLLEFLCICVACIVCYYNSTQCGLVFDDISAIRDNKDLRPHTPLINVFLNDFWGTPMRKEQSHKSYRPLTVLTFRFNYLLHALEPFGYHLVNLLLHLSVCLLWRRVCRLLLRQCAASGSNAISAPSSSSVSQLNTCAFVASLLFAVHPVHTEAVTGVVGRAELLSSICFLAAFLSYAKSVGDSGCPRRTNWLTLFGCFGSCLLASMLCKEQGITIAGICVVYELFVVHQLRPLHLCHFVLRLFDERTEQQSPKLANPSGIRRWSSSTLWKRLSFLVGITLTLLVGRVYVMGSQLPIFTRFDNPASAADTPERQLTYGYLIYLNCWLLLCPSLLCCDWTMGTVPLLQGFTDSRNITTLLTFLALGAMVAKTCFTRNLALSRTLIMCLGWMVLPFLPASNLFFPVGFVVAERILYMPSMGYCLLVAYGFEQLQRRGSLSWQRFSQAALAILLLTHALKTHQRNLDWRTEYSLFMSGVHVNQRNAKLYNNVGHALENEGKFEEALLYFQQAVRIQTDDIGAHINVGRTFNNLKRYAEAEQAYVQAKALFPQAKPGVSYHARIAPNHLNVFINLANLIAKNQTRLEEADHLYRQAISMRSDYVQAYINRGDILMKLNRTAQAQEVYEQALLYDNENADIYYNLGVVFLEQGKSQQAQVYFNKAIELYPEHEQALLNSAILLQELGGEEARRVSRSRLYKVLENDDQNEKVYFNLGMLAMDESSFDEAEQFFKRAIHLKADFRSALFNLALLLADTKRPLDAVPFLNQLIRHHPSHVKGLILLGDIYINHMKDLDEAEKCYRSILHYDPHNTQGLHNLCVVFVERKRLAKAAACLQYAQRLAPAEDYIGRHLQIVLARLQKINKLPESAPERKLAYEDYDPLEFKLPQDRPTHKSRKRS.

Residues 1–26 (MSTNPNPGIHQYAPSTLPREREREGA) are disordered. Topologically, residues 1–36 (MSTNPNPGIHQYAPSTLPREREREGATNSPQRNLLE) are cytoplasmic. Residues 37–57 (FLCICVACIVCYYNSTQCGLV) form a helical membrane-spanning segment. Residues 58–114 (FDDISAIRDNKDLRPHTPLINVFLNDFWGTPMRKEQSHKSYRPLTVLTFRFNYLLHA) are Extracellular-facing. The chain crosses the membrane as a helical span at residues 115 to 135 (LEPFGYHLVNLLLHLSVCLLW). Residues 136 to 169 (RRVCRLLLRQCAASGSNAISAPSSSSVSQLNTCA) lie on the Cytoplasmic side of the membrane. The chain crosses the membrane as a helical span at residues 170–190 (FVASLLFAVHPVHTEAVTGVV). Topologically, residues 191-192 (GR) are extracellular. Residues 193–213 (AELLSSICFLAAFLSYAKSVG) traverse the membrane as a helical segment. The Cytoplasmic portion of the chain corresponds to 214–222 (DSGCPRRTN). 2 helical membrane passes run 223–239 (WLTLFGCFGSCLLASML) and 240–259 (CKEQGITIAGICVVYELFVV). Topologically, residues 260–303 (HQLRPLHLCHFVLRLFDERTEQQSPKLANPSGIRRWSSSTLWKR) are cytoplasmic. Residues 304–324 (LSFLVGITLTLLVGRVYVMGS) form a helical membrane-spanning segment. The Extracellular portion of the chain corresponds to 325–345 (QLPIFTRFDNPASAADTPERQ). The helical transmembrane segment at 346 to 366 (LTYGYLIYLNCWLLLCPSLLC) threads the bilayer. Over 367–384 (CDWTMGTVPLLQGFTDSR) the chain is Cytoplasmic. Residues 385-405 (NITTLLTFLALGAMVAKTCFT) form a helical membrane-spanning segment. The Extracellular segment spans residues 406-419 (RNLALSRTLIMCLG). Residues 420–440 (WMVLPFLPASNLFFPVGFVVA) traverse the membrane as a helical segment. The Cytoplasmic segment spans residues 441–442 (ER). The helical transmembrane segment at 443-463 (ILYMPSMGYCLLVAYGFEQLQ) threads the bilayer. Residues 464 to 926 (RRGSLSWQRF…RPTHKSRKRS (463 aa)) are Extracellular-facing. TPR repeat units follow at residues 514–547 (AKLYNNVGHALENEGKFEEALLYFQQAVRIQTDD), 548–581 (IGAHINVGRTFNNLKRYAEAEQAYVQAKALFPQA), 596–630 (LNVFINLANLIAKNQTRLEEADHLYRQAISMRSDY), 631–664 (VQAYINRGDILMKLNRTAQAQEVYEQALLYDNEN), 665–698 (ADIYYNLGVVFLEQGKSQQAQVYFNKAIELYPEH), 736–769 (EKVYFNLGMLAMDESSFDEAEQFFKRAIHLKADF), 770–803 (RSALFNLALLLADTKRPLDAVPFLNQLIRHHPSH), 805–838 (KGLILLGDIYINHMKDLDEAEKCYRSILHYDPHN), and 839–872 (TQGLHNLCVVFVERKRLAKAAACLQYAQRLAPAE). 2 N-linked (GlcNAc...) asparagine glycosylation sites follow: N609 and N645.

The protein belongs to the TMTC family.

The protein localises to the membrane. Its subcellular location is the endoplasmic reticulum. The catalysed reaction is a di-trans,poly-cis-dolichyl beta-D-mannosyl phosphate + L-seryl-[protein] = 3-O-(alpha-D-mannosyl)-L-seryl-[protein] + a di-trans,poly-cis-dolichyl phosphate + H(+). The enzyme catalyses a di-trans,poly-cis-dolichyl beta-D-mannosyl phosphate + L-threonyl-[protein] = 3-O-(alpha-D-mannosyl)-L-threonyl-[protein] + a di-trans,poly-cis-dolichyl phosphate + H(+). The protein operates within protein modification; protein glycosylation. In terms of biological role, transfers mannosyl residues to the hydroxyl group of serine or threonine residues. The chain is Protein O-mannosyl-transferase Tmtc3 from Drosophila melanogaster (Fruit fly).